The sequence spans 299 residues: MKSDNGILMSNINKPNKCYYYCIISEQWDELIYNITGGKITELRGTYVHPKLIIHIASWCNPEYAIKVSEIVLSYHAKEAIKEKEKLLQKKNDKIDELSLKIDKQNKQINKQTATMKKQTKIMKNQTNMMKDQKSTIKEQDKKINELLSKSNEVLGYAKDTNRKITHVVKERVPYSDEPKIEHQFIIMKNNDEPIKPKKGESPKKIYDYTALRIMNKSKSSTMNRYFKDHPDGETILTIDYTPNAMHLWNQCKKELIEDDKIKSSGTSSSSFNLKKGYSENKLKKDIKRIHNLRLKHPE.

In terms of domain architecture, KilA-N spans 1–75; it reads MKSDNGILMS…IKVSEIVLSY (75 aa). A coiled-coil region spans residues 76-150; that stretch reads HAKEAIKEKE…DKKINELLSK (75 aa).

This is Putative KilA-N domain-containing protein R879 from Acanthamoeba polyphaga mimivirus (APMV).